Reading from the N-terminus, the 397-residue chain is Major outer membrane porin, serovar H (397 aa).

An N-terminal signal peptide occupies residues 1 to 22 (MKKLLKSVLVFAALSSASSLQA).

The protein belongs to the chlamydial porin (CP) (TC 1.B.2) family. Part of a disulfide cross-linked outer membrane complex (COMC) composed of the major outer membrane porin (MOMP), the small cysteine-rich protein (OmcA) and the large cysteine-rich periplasmic protein (OmcB).

The protein localises to the cell outer membrane. Functionally, in elementary bodies (EBs, the infectious stage, which is able to survive outside the host cell) provides the structural integrity of the outer envelope through disulfide cross-links with the small cysteine-rich protein and the large cysteine-rich periplasmic protein. It has been described in publications as the Sarkosyl-insoluble COMC (Chlamydia outer membrane complex), and serves as the functional equivalent of peptidoglycan. Its function is as follows. Permits diffusion of specific solutes through the outer membrane. This Chlamydia trachomatis protein is Major outer membrane porin, serovar H (ompA).